Consider the following 339-residue polypeptide: Centromere protein N (339 aa).

Residues Ser-226 and Ser-235 each carry the phosphoserine modification.

Belongs to the CENP-N/CHL4 family. In terms of assembly, component of the CENPA-NAC complex, at least composed of CENPA, CENPC, CENPH, CENPM, CENPN, CENPT and CENPU. The CENPA-NAC complex interacts with the CENPA-CAD complex, composed of CENPI, CENPK, CENPL, CENPO, CENPP, CENPQ, CENPR and CENPS. Interacts directly with CENPA. Identified in a centromere complex containing histones H2A, H2B and H4, and at least CENPA, CENPB, CENPC, CENPT, CENPN, HJURP, SUPT16H, SSRP1 and RSF1.

The protein resides in the nucleus. It is found in the chromosome. It localises to the centromere. Its subcellular location is the kinetochore. Its function is as follows. Component of the CENPA-NAC (nucleosome-associated) complex, a complex that plays a central role in assembly of kinetochore proteins, mitotic progression and chromosome segregation. The CENPA-NAC complex recruits the CENPA-CAD (nucleosome distal) complex and may be involved in incorporation of newly synthesized CENPA into centromeres. CENPN is the first protein to bind specifically to CENPA nucleosomes and the direct binding of CENPA nucleosomes by CENPN is required for centromere assembly. Required for chromosome congression and efficiently align the chromosomes on a metaphase plate. The chain is Centromere protein N (CENPN) from Bos taurus (Bovine).